Here is a 290-residue protein sequence, read N- to C-terminus: 4-hydroxybenzoate octaprenyltransferase (290 aa).

Transmembrane regions (helical) follow at residues 21–41, 44–64, 84–104, 106–126, 142–162, 212–232, 235–255, and 267–287; these read IGTL…VKGM, LSIL…GCVI, LATG…LVFC, FILV…AVFL, LFLG…SIEA, IISL…YLSQ, TSYF…CKLI, and FLNN…GIFF.

Belongs to the UbiA prenyltransferase family. It depends on Mg(2+) as a cofactor.

The protein localises to the cell inner membrane. The catalysed reaction is all-trans-octaprenyl diphosphate + 4-hydroxybenzoate = 4-hydroxy-3-(all-trans-octaprenyl)benzoate + diphosphate. It functions in the pathway cofactor biosynthesis; ubiquinone biosynthesis. In terms of biological role, catalyzes the prenylation of para-hydroxybenzoate (PHB) with an all-trans polyprenyl group. Mediates the second step in the final reaction sequence of ubiquinone-8 (UQ-8) biosynthesis, which is the condensation of the polyisoprenoid side chain with PHB, generating the first membrane-bound Q intermediate 3-octaprenyl-4-hydroxybenzoate. This is 4-hydroxybenzoate octaprenyltransferase from Pasteurella multocida (strain Pm70).